The following is a 406-amino-acid chain: Succinylornithine transaminase (406 aa).

K252 is subject to N6-(pyridoxal phosphate)lysine.

Belongs to the class-III pyridoxal-phosphate-dependent aminotransferase family. AstC subfamily. Requires pyridoxal 5'-phosphate as cofactor.

The enzyme catalyses N(2)-succinyl-L-ornithine + 2-oxoglutarate = N-succinyl-L-glutamate 5-semialdehyde + L-glutamate. It functions in the pathway amino-acid degradation; L-arginine degradation via AST pathway; L-glutamate and succinate from L-arginine: step 3/5. Catalyzes the transamination of N(2)-succinylornithine and alpha-ketoglutarate into N(2)-succinylglutamate semialdehyde and glutamate. Can also act as an acetylornithine aminotransferase. The sequence is that of Succinylornithine transaminase from Citrobacter koseri (strain ATCC BAA-895 / CDC 4225-83 / SGSC4696).